The chain runs to 371 residues: Peptidyl-prolyl cis-trans isomerase D (371 aa).

The 165-residue stretch at 8–172 folds into the PPIase cyclophilin-type domain; sequence FFDIAIGGQL…EPVVIADCGQ (165 aa). Positions 175-202 are disordered; sequence SDDPFLAERTSTDGDPYEDYPDDEDQEL. The segment covering 189 to 201 has biased composition (acidic residues); that stretch reads DPYEDYPDDEDQE. 3 TPR repeats span residues 212–245, 265–303, and 308–341; these read AKTI…LDVH, APLL…LELS, and AKAY…LPED.

This sequence belongs to the cyclophilin-type PPIase family. PPIase D subfamily.

Its subcellular location is the cytoplasm. The enzyme catalyses [protein]-peptidylproline (omega=180) = [protein]-peptidylproline (omega=0). PPIases accelerate the folding of proteins. It catalyzes the cis-trans isomerization of proline imidic peptide bonds in oligopeptides. This chain is Peptidyl-prolyl cis-trans isomerase D (Cyp40), found in Amanita muscaria (Fly agaric).